The chain runs to 243 residues: Pyridoxine 5'-phosphate synthase (243 aa).

N9 contributes to the 3-amino-2-oxopropyl phosphate binding site. Residue 11 to 12 participates in 1-deoxy-D-xylulose 5-phosphate binding; sequence DH. A 3-amino-2-oxopropyl phosphate-binding site is contributed by R20. Residue H45 is the Proton acceptor of the active site. The 1-deoxy-D-xylulose 5-phosphate site is built by R47 and H52. E72 functions as the Proton acceptor in the catalytic mechanism. T102 contacts 1-deoxy-D-xylulose 5-phosphate. The active-site Proton donor is H193. 3-amino-2-oxopropyl phosphate is bound by residues G194 and 215 to 216; that span reads GH.

Belongs to the PNP synthase family. Homooctamer; tetramer of dimers.

Its subcellular location is the cytoplasm. The catalysed reaction is 3-amino-2-oxopropyl phosphate + 1-deoxy-D-xylulose 5-phosphate = pyridoxine 5'-phosphate + phosphate + 2 H2O + H(+). The protein operates within cofactor biosynthesis; pyridoxine 5'-phosphate biosynthesis; pyridoxine 5'-phosphate from D-erythrose 4-phosphate: step 5/5. Catalyzes the complicated ring closure reaction between the two acyclic compounds 1-deoxy-D-xylulose-5-phosphate (DXP) and 3-amino-2-oxopropyl phosphate (1-amino-acetone-3-phosphate or AAP) to form pyridoxine 5'-phosphate (PNP) and inorganic phosphate. In Vibrio parahaemolyticus serotype O3:K6 (strain RIMD 2210633), this protein is Pyridoxine 5'-phosphate synthase.